The sequence spans 754 residues: Polyribonucleotide nucleotidyltransferase (754 aa).

Positions 525 and 531 each coordinate Mg(2+). Residues 591–650 (PRITTIKVPVDKIGEVIGPKGKMINSITEETGASISIEDDGTVFVGASNGEAAQAAIDKI) form the KH domain. Residues 662 to 731 (GERFLGTVVK…NRGKISLVLV (70 aa)) enclose the S1 motif domain.

The protein belongs to the polyribonucleotide nucleotidyltransferase family. The cofactor is Mg(2+).

The protein localises to the cytoplasm. It catalyses the reaction RNA(n+1) + phosphate = RNA(n) + a ribonucleoside 5'-diphosphate. In terms of biological role, involved in mRNA degradation. Catalyzes the phosphorolysis of single-stranded polyribonucleotides processively in the 3'- to 5'-direction. The chain is Polyribonucleotide nucleotidyltransferase from Mycolicibacterium vanbaalenii (strain DSM 7251 / JCM 13017 / BCRC 16820 / KCTC 9966 / NRRL B-24157 / PYR-1) (Mycobacterium vanbaalenii).